Here is a 226-residue protein sequence, read N- to C-terminus: NAD(P)H-hydrate epimerase (226 aa).

The YjeF N-terminal domain maps to 10–215; sequence AIELDLDLFE…ALQRKYQLNL (206 aa). 58–62 is a binding site for (6S)-NADPHX; that stretch reads NNGGD. Residues N59 and D123 each coordinate K(+). (6S)-NADPHX contacts are provided by residues 127–133 and D156; that span reads GFGFKPP. S159 is a binding site for K(+).

The protein belongs to the NnrE/AIBP family. Requires K(+) as cofactor.

It carries out the reaction (6R)-NADHX = (6S)-NADHX. The enzyme catalyses (6R)-NADPHX = (6S)-NADPHX. Its function is as follows. Catalyzes the epimerization of the S- and R-forms of NAD(P)HX, a damaged form of NAD(P)H that is a result of enzymatic or heat-dependent hydration. This is a prerequisite for the S-specific NAD(P)H-hydrate dehydratase to allow the repair of both epimers of NAD(P)HX. In Drosophila pseudoobscura pseudoobscura (Fruit fly), this protein is NAD(P)H-hydrate epimerase.